Consider the following 218-residue polypeptide: Alkylmercury lyase (218 aa).

This sequence belongs to the MerB family.

The catalysed reaction is an alkylmercury + H(+) = an alkane + Hg(2+). In terms of biological role, cleaves the carbon-mercury bond of organomercurials such as phenylmercuric acetate. One product is Hg(2+), which is subsequently detoxified by the mercuric reductase. The protein is Alkylmercury lyase (merB1) of Bacillus cereus.